We begin with the raw amino-acid sequence, 312 residues long: uncharacterized protein (312 aa).

The next 10 membrane-spanning stretches (helical) occupy residues 13–33 (AAGT…SIWI), 45–65 (AVLL…FLIY), 81–101 (ACGA…IGLN), 105–125 (AMVE…FTAC), 133–153 (IQDL…LGGW), 162–182 (MIGA…LVLS), 198–218 (GMTA…AAGM), 229–249 (MYGL…VLML), 260–280 (AAAI…LFLG), and 283–303 (LGLI…GMEY). The EamA domain maps to 173 to 303 (AVYAGYLVLS…VFFVITGMEY (131 aa)).

Belongs to the EamA transporter family.

Its subcellular location is the cell membrane. This is an uncharacterized protein from Bacillus subtilis (strain 168).